The chain runs to 243 residues: MALEPIILIPARIGSTRLPQKALAEIAGKPMIVHVAEQAKKAAFGRIIVATDHNNIAKVVTAYGHECIITCRDHKSGSDRIYEALTHIDPERRYNVILNVQGDLPTITPHEIISALRPLENSLTDIATLGAKIVEENEKTDPNIVKIIGTPLSHNRFRALYFTRATAPYGDGPLYHHIGIYAYRREALEKFVALKPSPLEQREKLEQLRALEHNMRIDVEIVDTIPLGVDTQRDLERVRKILA.

The protein belongs to the KdsB family.

Its subcellular location is the cytoplasm. The catalysed reaction is 3-deoxy-alpha-D-manno-oct-2-ulosonate + CTP = CMP-3-deoxy-beta-D-manno-octulosonate + diphosphate. It functions in the pathway nucleotide-sugar biosynthesis; CMP-3-deoxy-D-manno-octulosonate biosynthesis; CMP-3-deoxy-D-manno-octulosonate from 3-deoxy-D-manno-octulosonate and CTP: step 1/1. The protein operates within bacterial outer membrane biogenesis; lipopolysaccharide biosynthesis. Activates KDO (a required 8-carbon sugar) for incorporation into bacterial lipopolysaccharide in Gram-negative bacteria. The protein is 3-deoxy-manno-octulosonate cytidylyltransferase of Bartonella henselae (strain ATCC 49882 / DSM 28221 / CCUG 30454 / Houston 1) (Rochalimaea henselae).